We begin with the raw amino-acid sequence, 990 residues long: TonB-dependent receptor P26 (990 aa).

The short motif at Asp-86–Tyr-93 is the TonB box element. A TBDR plug domain is found at Arg-97–Lys-213. The 771-residue stretch at Ser-220–Phe-990 folds into the TBDR beta-barrel domain. The segment at Thr-878 to Ala-902 is disordered. A TonB C-terminal box motif is present at residues Gly-974–Phe-990.

The protein belongs to the TonB-dependent receptor family.

The protein resides in the cell outer membrane. Its function is as follows. TonB-dependent receptor probably involved in ulvan degradation. Ulvan is the main polysaccharide component of the Ulvales (green seaweed) cell wall. It is composed of disaccharide building blocks comprising 3-sulfated rhamnose (Rha3S) linked to D-glucuronic acid (GlcA), L-iduronic acid (IduA), or D-xylose (Xyl). The TonB-dependent receptor may mediate transport of ulvan oligosaccharides from the surface of the outer membrane to the periplasm for subsequent degradation. The chain is TonB-dependent receptor P26 from Formosa agariphila (strain DSM 15362 / KCTC 12365 / LMG 23005 / KMM 3901 / M-2Alg 35-1).